We begin with the raw amino-acid sequence, 390 residues long: MGAFLDKPKTEKHNAHGAGNGLRYGLSSMQGWRVEMEDAHTAVVGIPHGLEDWSFFAVYDGHAGSRVANYCSTHLLEHITTNEDFRAADKSGFALEPSVENVKTGIRTGFLKIDEYMRNFSDLRNGMDRSGSTAVGVMISPTHIYFINCGDSRAVLCRNGQVCFSTQDHKPCNPMEKERIQNAGGSVMIQRVNGSLAVSRALGDYDYKCVDGKGPTEQLVSPEPEVYEILRAEEDEFVVLACDGIWDVMSNEELCEFVNSRLEVSDDLENVCNWVVDTCLHKGSRDNMSIVLVCFANAPKVSDEAVKRDLELDKHLESRVEEIMQKSGEEGMPDLAHVMRILSAENIPNLPPGGGLAGKRNVIEAVYSRLNPNKDNDGGAGDLEDSLVAL.

The span at 1-14 (MGAFLDKPKTEKHN) shows a compositional bias: basic and acidic residues. The segment at 1-20 (MGAFLDKPKTEKHNAHGAGN) is disordered. The N-myristoyl glycine moiety is linked to residue Gly-2. Lys-12 is covalently cross-linked (Glycyl lysine isopeptide (Lys-Gly) (interchain with G-Cter in ISG15)). The PPM-type phosphatase domain maps to 23–295 (RYGLSSMQGW…DNMSIVLVCF (273 aa)). Mn(2+) is bound by residues Asp-60, Gly-61, Asp-243, and Asp-286. A disordered region spans residues 371-390 (NPNKDNDGGAGDLEDSLVAL). Residue Ser-386 is modified to Phosphoserine.

Belongs to the PP2C family. As to quaternary structure, monomer. Interacts with PAK6. Interacts with the phosphorylated form of IKBKB/IKKB. Mg(2+) serves as cofactor. It depends on Mn(2+) as a cofactor. In terms of processing, isgylation negatively regulates its activity. Post-translationally, N-myristoylation is essential for the recognition of its substrates for dephosphorylation.

It localises to the cytoplasm. It is found in the cytosol. The protein localises to the membrane. It catalyses the reaction O-phospho-L-seryl-[protein] + H2O = L-seryl-[protein] + phosphate. It carries out the reaction O-phospho-L-threonyl-[protein] + H2O = L-threonyl-[protein] + phosphate. Its function is as follows. Enzyme with a broad specificity. Dephosphorylates PRKAA1 and PRKAA2. Inhibits TBK1-mediated antiviral signaling by dephosphorylating it at 'Ser-172'. Plays an important role in the termination of TNF-alpha-mediated NF-kappa-B activation through dephosphorylating and inactivating IKBKB/IKKB. This is Protein phosphatase 1B (Ppm1b) from Rattus norvegicus (Rat).